A 608-amino-acid polypeptide reads, in one-letter code: Elongation factor 4 (608 aa).

The tr-type G domain occupies 11-193 (SKIRNFSIIA…QIVEKVPAPD (183 aa)). Residues 23–28 (DHGKST) and 140–143 (NKID) contribute to the GTP site.

This sequence belongs to the TRAFAC class translation factor GTPase superfamily. Classic translation factor GTPase family. LepA subfamily.

It is found in the cell membrane. The catalysed reaction is GTP + H2O = GDP + phosphate + H(+). Required for accurate and efficient protein synthesis under certain stress conditions. May act as a fidelity factor of the translation reaction, by catalyzing a one-codon backward translocation of tRNAs on improperly translocated ribosomes. Back-translocation proceeds from a post-translocation (POST) complex to a pre-translocation (PRE) complex, thus giving elongation factor G a second chance to translocate the tRNAs correctly. Binds to ribosomes in a GTP-dependent manner. In Bacillus cytotoxicus (strain DSM 22905 / CIP 110041 / 391-98 / NVH 391-98), this protein is Elongation factor 4.